A 166-amino-acid polypeptide reads, in one-letter code: NADH-quinone oxidoreductase subunit I (166 aa).

4Fe-4S ferredoxin-type domains are found at residues 57-87 and 97-126; these read LRRY…IESE and TRYD…VTPI. Residues Cys-67, Cys-70, Cys-73, Cys-77, Cys-106, Cys-109, Cys-112, and Cys-116 each contribute to the [4Fe-4S] cluster site.

Belongs to the complex I 23 kDa subunit family. As to quaternary structure, NDH-1 is composed of 14 different subunits. Subunits NuoA, H, J, K, L, M, N constitute the membrane sector of the complex. [4Fe-4S] cluster is required as a cofactor.

It is found in the cell inner membrane. It catalyses the reaction a quinone + NADH + 5 H(+)(in) = a quinol + NAD(+) + 4 H(+)(out). In terms of biological role, NDH-1 shuttles electrons from NADH, via FMN and iron-sulfur (Fe-S) centers, to quinones in the respiratory chain. The immediate electron acceptor for the enzyme in this species is believed to be ubiquinone. Couples the redox reaction to proton translocation (for every two electrons transferred, four hydrogen ions are translocated across the cytoplasmic membrane), and thus conserves the redox energy in a proton gradient. The chain is NADH-quinone oxidoreductase subunit I from Legionella pneumophila (strain Paris).